A 404-amino-acid polypeptide reads, in one-letter code: Phosphopentomutase (404 aa).

Positions 10, 303, 308, 344, 345, and 356 each coordinate Mn(2+).

The protein belongs to the phosphopentomutase family. Mn(2+) serves as cofactor.

It is found in the cytoplasm. The enzyme catalyses 2-deoxy-alpha-D-ribose 1-phosphate = 2-deoxy-D-ribose 5-phosphate. It catalyses the reaction alpha-D-ribose 1-phosphate = D-ribose 5-phosphate. Its pathway is carbohydrate degradation; 2-deoxy-D-ribose 1-phosphate degradation; D-glyceraldehyde 3-phosphate and acetaldehyde from 2-deoxy-alpha-D-ribose 1-phosphate: step 1/2. In terms of biological role, isomerase that catalyzes the conversion of deoxy-ribose 1-phosphate (dRib-1-P) and ribose 1-phosphate (Rib-1-P) to deoxy-ribose 5-phosphate (dRib-5-P) and ribose 5-phosphate (Rib-5-P), respectively. The sequence is that of Phosphopentomutase from Shewanella baltica (strain OS223).